The sequence spans 252 residues: tRNA (guanine-N(1)-)-methyltransferase (252 aa).

S-adenosyl-L-methionine is bound by residues Gly-113 and 133-138 (IGDYVL).

It belongs to the RNA methyltransferase TrmD family. In terms of assembly, homodimer.

It localises to the cytoplasm. It catalyses the reaction guanosine(37) in tRNA + S-adenosyl-L-methionine = N(1)-methylguanosine(37) in tRNA + S-adenosyl-L-homocysteine + H(+). Its function is as follows. Specifically methylates guanosine-37 in various tRNAs. The sequence is that of tRNA (guanine-N(1)-)-methyltransferase from Xanthomonas campestris pv. campestris (strain B100).